We begin with the raw amino-acid sequence, 101 residues long: Small ribosomal subunit protein uS14 (101 aa).

Belongs to the universal ribosomal protein uS14 family. As to quaternary structure, part of the 30S ribosomal subunit. Contacts proteins S3 and S10.

Its function is as follows. Binds 16S rRNA, required for the assembly of 30S particles and may also be responsible for determining the conformation of the 16S rRNA at the A site. This chain is Small ribosomal subunit protein uS14, found in Francisella tularensis subsp. novicida (strain U112).